Here is a 492-residue protein sequence, read N- to C-terminus: N-succinylglutamate 5-semialdehyde dehydrogenase (492 aa).

220 to 225 provides a ligand contact to NAD(+); sequence GSANTG. Active-site residues include Glu243 and Cys277.

Belongs to the aldehyde dehydrogenase family. AstD subfamily.

The catalysed reaction is N-succinyl-L-glutamate 5-semialdehyde + NAD(+) + H2O = N-succinyl-L-glutamate + NADH + 2 H(+). Its pathway is amino-acid degradation; L-arginine degradation via AST pathway; L-glutamate and succinate from L-arginine: step 4/5. Its function is as follows. Catalyzes the NAD-dependent reduction of succinylglutamate semialdehyde into succinylglutamate. This chain is N-succinylglutamate 5-semialdehyde dehydrogenase, found in Escherichia coli O127:H6 (strain E2348/69 / EPEC).